We begin with the raw amino-acid sequence, 370 residues long: 3-isopropylmalate dehydrogenase (370 aa).

77–90 is a binding site for NAD(+); that stretch reads GPKWDSVPYEVRPE. Positions 97, 107, 135, and 226 each coordinate substrate. Residues D226, D250, and D254 each contribute to the Mg(2+) site. NAD(+) is bound at residue 290-302; that stretch reads GSAPDIAGKGIAN.

The protein belongs to the isocitrate and isopropylmalate dehydrogenases family. LeuB type 1 subfamily. As to quaternary structure, homodimer. The cofactor is Mg(2+). Mn(2+) serves as cofactor.

Its subcellular location is the cytoplasm. It carries out the reaction (2R,3S)-3-isopropylmalate + NAD(+) = 4-methyl-2-oxopentanoate + CO2 + NADH. It functions in the pathway amino-acid biosynthesis; L-leucine biosynthesis; L-leucine from 3-methyl-2-oxobutanoate: step 3/4. Functionally, catalyzes the oxidation of 3-carboxy-2-hydroxy-4-methylpentanoate (3-isopropylmalate) to 3-carboxy-4-methyl-2-oxopentanoate. The product decarboxylates to 4-methyl-2 oxopentanoate. In Brucella suis biovar 1 (strain 1330), this protein is 3-isopropylmalate dehydrogenase.